We begin with the raw amino-acid sequence, 199 residues long: Transgelin-2 (199 aa).

An N-acetylalanine modification is found at Ala2. Phosphoserine is present on Ser11. 2 positions are modified to N6-acetyllysine: Lys17 and Lys20. In terms of domain architecture, Calponin-homology (CH) spans 24-136 (ADLEQILIQW…RTLMNLGGLA (113 aa)). Position 163 is a phosphoserine (Ser163). Lys171 participates in a covalent cross-link: Glycyl lysine isopeptide (Lys-Gly) (interchain with G-Cter in SUMO2). One copy of the Calponin-like repeat lies at 174 to 199 (IGLQMGTNRGASQAGMTGYGMPRQIL). Thr180 carries the post-translational modification Phosphothreonine. Residues Arg182 and Arg196 each carry the omega-N-methylarginine modification.

The protein belongs to the calponin family.

This is Transgelin-2 (Tagln2) from Mus musculus (Mouse).